Here is a 785-residue protein sequence, read N- to C-terminus: Putative lipase C4A8.10 (785 aa).

Disordered regions lie at residues His29–Phe99 and Asn115–Ser140. The segment covering Thr32–Val41 has biased composition (low complexity). Basic and acidic residues predominate over residues Thr47 to Ala58. The segment covering Met63–His86 has biased composition (polar residues). 2 stretches are compositionally biased toward low complexity: residues Ser89–Phe99 and Gly127–Ser140. Ser390 functions as the Charge relay system in the catalytic mechanism.

It belongs to the putative lipase ROG1 family.

The sequence is that of Putative lipase C4A8.10 from Schizosaccharomyces pombe (strain 972 / ATCC 24843) (Fission yeast).